A 90-amino-acid chain; its full sequence is Small ribosomal subunit protein bS20 (90 aa).

Positions 1–21 (MANHKSALKRVRQTKKRTERN) are disordered.

The protein belongs to the bacterial ribosomal protein bS20 family.

In terms of biological role, binds directly to 16S ribosomal RNA. This chain is Small ribosomal subunit protein bS20, found in Nitratiruptor sp. (strain SB155-2).